Consider the following 186-residue polypeptide: ATP synthase subunit b (186 aa).

A helical membrane pass occupies residues 5 to 25; it reads LILNLLVLLAPAAVFAAGGGH.

Belongs to the ATPase B chain family. F-type ATPases have 2 components, F(1) - the catalytic core - and F(0) - the membrane proton channel. F(1) has five subunits: alpha(3), beta(3), gamma(1), delta(1), epsilon(1). F(0) has three main subunits: a(1), b(2) and c(10-14). The alpha and beta chains form an alternating ring which encloses part of the gamma chain. F(1) is attached to F(0) by a central stalk formed by the gamma and epsilon chains, while a peripheral stalk is formed by the delta and b chains.

It is found in the cell inner membrane. In terms of biological role, f(1)F(0) ATP synthase produces ATP from ADP in the presence of a proton or sodium gradient. F-type ATPases consist of two structural domains, F(1) containing the extramembraneous catalytic core and F(0) containing the membrane proton channel, linked together by a central stalk and a peripheral stalk. During catalysis, ATP synthesis in the catalytic domain of F(1) is coupled via a rotary mechanism of the central stalk subunits to proton translocation. Its function is as follows. Component of the F(0) channel, it forms part of the peripheral stalk, linking F(1) to F(0). The sequence is that of ATP synthase subunit b from Bdellovibrio bacteriovorus (strain ATCC 15356 / DSM 50701 / NCIMB 9529 / HD100).